Consider the following 303-residue polypeptide: uncharacterized protein (303 aa).

This is an uncharacterized protein from Archaeoglobus fulgidus (strain ATCC 49558 / DSM 4304 / JCM 9628 / NBRC 100126 / VC-16).